The sequence spans 428 residues: AP-1 complex subunit mu-1 (428 aa).

The MHD domain occupies 170–426 (KNEVFLDVIE…ITMAGEYELR (257 aa)).

The protein belongs to the adaptor complexes medium subunit family. Adaptor protein complex 1 (AP-1) is a heterotetramer composed of two large adaptins (gamma-type subunit and beta-type subunit), a medium adaptin (mu-type subunit) and a small adaptin (sigma-type subunit).

The protein resides in the golgi apparatus. It is found in the cytoplasmic vesicle. The protein localises to the clathrin-coated vesicle membrane. Functionally, subunit of clathrin-associated adaptor protein complex 1 that plays a role in protein sorting at the trans-Golgi network and early endosomes (TGN/EE). The AP complexes mediate the recruitment of clathrin to membranes and the recognition of sorting signals within the cytosolic tails of transmembrane cargo molecules. Functions redundantly with AP1M2 in multiple post-Golgi trafficking pathways leading from the TGN to the vacuole, the plasma membrane, and the cell-division plane. This Arabidopsis thaliana (Mouse-ear cress) protein is AP-1 complex subunit mu-1 (AP1M1).